The following is a 233-amino-acid chain: Large ribosomal subunit protein uL2 (233 aa).

The segment at 194 to 233 (HPHGGGNHQHVGRPSTVGRGTPPGRKVGRLSPKRRKKYGR) is disordered. Residues 219–233 (KVGRLSPKRRKKYGR) are compositionally biased toward basic residues.

It belongs to the universal ribosomal protein uL2 family. Part of the 50S ribosomal subunit. Forms a bridge to the 30S subunit in the 70S ribosome.

Its function is as follows. One of the primary rRNA binding proteins. Required for association of the 30S and 50S subunits to form the 70S ribosome, for tRNA binding and peptide bond formation. It has been suggested to have peptidyltransferase activity; this is somewhat controversial. Makes several contacts with the 16S rRNA in the 70S ribosome. This is Large ribosomal subunit protein uL2 from Picrophilus torridus (strain ATCC 700027 / DSM 9790 / JCM 10055 / NBRC 100828 / KAW 2/3).